The primary structure comprises 127 residues: Small ribosomal subunit protein uS12 (127 aa).

Aspartate 89 carries the post-translational modification 3-methylthioaspartic acid. The disordered stretch occupies residues 101-127 (ALDTSGVAGRTQRRSKYGAKRPKEAKK). Basic residues predominate over residues 111–127 (TQRRSKYGAKRPKEAKK).

The protein belongs to the universal ribosomal protein uS12 family. Part of the 30S ribosomal subunit. Contacts proteins S8 and S17. May interact with IF1 in the 30S initiation complex.

With S4 and S5 plays an important role in translational accuracy. Its function is as follows. Interacts with and stabilizes bases of the 16S rRNA that are involved in tRNA selection in the A site and with the mRNA backbone. Located at the interface of the 30S and 50S subunits, it traverses the body of the 30S subunit contacting proteins on the other side and probably holding the rRNA structure together. The combined cluster of proteins S8, S12 and S17 appears to hold together the shoulder and platform of the 30S subunit. The protein is Small ribosomal subunit protein uS12 of Flavobacterium johnsoniae (strain ATCC 17061 / DSM 2064 / JCM 8514 / BCRC 14874 / CCUG 350202 / NBRC 14942 / NCIMB 11054 / UW101) (Cytophaga johnsonae).